A 445-amino-acid polypeptide reads, in one-letter code: Phosphoglucosamine mutase (445 aa).

Residue S101 is the Phosphoserine intermediate of the active site. Positions 101, 240, 242, and 244 each coordinate Mg(2+). S101 is subject to Phosphoserine.

The protein belongs to the phosphohexose mutase family. Mg(2+) serves as cofactor. In terms of processing, activated by phosphorylation.

It catalyses the reaction alpha-D-glucosamine 1-phosphate = D-glucosamine 6-phosphate. Functionally, catalyzes the conversion of glucosamine-6-phosphate to glucosamine-1-phosphate. This Pseudomonas fluorescens (strain ATCC BAA-477 / NRRL B-23932 / Pf-5) protein is Phosphoglucosamine mutase.